Consider the following 679-residue polypeptide: Glycine--tRNA ligase beta subunit (679 aa).

The protein belongs to the class-II aminoacyl-tRNA synthetase family. Tetramer of two alpha and two beta subunits.

It is found in the cytoplasm. The enzyme catalyses tRNA(Gly) + glycine + ATP = glycyl-tRNA(Gly) + AMP + diphosphate. The chain is Glycine--tRNA ligase beta subunit from Streptococcus pyogenes serotype M4 (strain MGAS10750).